A 550-amino-acid polypeptide reads, in one-letter code: Methionine--tRNA ligase (550 aa).

The 'HIGH' region signature appears at 13-23; sequence PYANGPLHFGH. Zn(2+)-binding residues include C145, C148, C158, and C161. The short motif at 331 to 335 is the 'KMSKS' region element; sequence QFSKS. K334 contributes to the ATP binding site.

This sequence belongs to the class-I aminoacyl-tRNA synthetase family. MetG type 1 subfamily. In terms of assembly, monomer. It depends on Zn(2+) as a cofactor.

Its subcellular location is the cytoplasm. It carries out the reaction tRNA(Met) + L-methionine + ATP = L-methionyl-tRNA(Met) + AMP + diphosphate. In terms of biological role, is required not only for elongation of protein synthesis but also for the initiation of all mRNA translation through initiator tRNA(fMet) aminoacylation. The sequence is that of Methionine--tRNA ligase from Chlamydia trachomatis serovar L2b (strain UCH-1/proctitis).